Here is a 517-residue protein sequence, read N- to C-terminus: MSPLALVSVSDKTNIIPFCKDLVEKFGYNILSSGGTAEYLTEAKVPVLKVADFTESPEILDGRVKTLHPKIHGGILAKRSNEEHQREILENKLELIDLVVVNLYPFKKKVEEQCPWEEAIENIDIGGPSMIRSAAKNHADVAVLVDPNQYQNYIEEIKKGPLSKDFKTKLAFEAFQHTASYDSAISNWISKEKDLRPSNFIESYPLIKQLRYGENPHQKALWYGLNNIGWNSAEQLQGKELSYNNILDLESALLTVLEFGYETKPNIKTESIAAVILKHNNPCGASISNSASSSFKNALKCDSVSAFGGIVAFNANVDKETALILKDIFLECVVAPSFDKEALEIFKTKKNLRVLKLTKEMLPKENQTCSKSIMGGILIQDSDNQENSEDSWISVTKKNPTEQEYLDLKFAWKICKHVKSNAIVVAKDQQTLGIGAGQMNRVGASKIALEAAKEIDSGGVLASDGFFPFADTVRLADKYGISSIIQPGGSIRDEESIKMCDSRGISMIFTHKRHFLH.

Residues M1–V145 form the MGS-like domain.

The protein belongs to the PurH family.

The catalysed reaction is (6R)-10-formyltetrahydrofolate + 5-amino-1-(5-phospho-beta-D-ribosyl)imidazole-4-carboxamide = 5-formamido-1-(5-phospho-D-ribosyl)imidazole-4-carboxamide + (6S)-5,6,7,8-tetrahydrofolate. It carries out the reaction IMP + H2O = 5-formamido-1-(5-phospho-D-ribosyl)imidazole-4-carboxamide. It functions in the pathway purine metabolism; IMP biosynthesis via de novo pathway; 5-formamido-1-(5-phospho-D-ribosyl)imidazole-4-carboxamide from 5-amino-1-(5-phospho-D-ribosyl)imidazole-4-carboxamide (10-formyl THF route): step 1/1. The protein operates within purine metabolism; IMP biosynthesis via de novo pathway; IMP from 5-formamido-1-(5-phospho-D-ribosyl)imidazole-4-carboxamide: step 1/1. This chain is Bifunctional purine biosynthesis protein PurH, found in Prochlorococcus marinus (strain MIT 9515).